The following is a 984-amino-acid chain: Putative formate dehydrogenase SA2102 (984 aa).

A 2Fe-2S ferredoxin-type domain is found at 3–79; that stretch reads EHLVVTLDGK…PMTVNTVNND (77 aa). 4 residues coordinate [2Fe-2S] cluster: C37, C48, C51, and C63. One can recognise a 4Fe-4S His(Cys)3-ligated-type domain in the interval 79-119; it reads DVKDAQKEALDRILEKHMLYCTVCDYNNGDCEIHNTMDAWG. 16 residues coordinate [4Fe-4S] cluster: H95, C99, C102, C109, C147, C150, C153, C157, C190, C193, C196, C200, C264, C267, C271, and C299. 4Fe-4S ferredoxin-type domains lie at 138 to 165 and 181 to 211; these read PFYRYDPNQCILCGRCVEACQDIEVNET and NDVPINESSCVSCGQCATVCPCNAMMEVNME. A formate dehydrogenase region spans residues 252-984; that stretch reads MRKERIKKTK…YVFPGNQVDK (733 aa). The 57-residue stretch at 257 to 313 folds into the 4Fe-4S Mo/W bis-MGD-type domain; that stretch reads IKKTKTVCTYCGVGCSFEVWTKDREILKVQPSHDSPANKIATCVKGKFSWGHINSDQ.

In the C-terminal section; belongs to the prokaryotic molybdopterin-containing oxidoreductase family. [2Fe-2S] cluster serves as cofactor. [4Fe-4S] cluster is required as a cofactor. Requires Mo-bis(molybdopterin guanine dinucleotide) as cofactor.

It catalyses the reaction formate + NAD(+) = CO2 + NADH. This chain is Putative formate dehydrogenase SA2102, found in Staphylococcus aureus (strain N315).